A 369-amino-acid chain; its full sequence is Molybdenum import ATP-binding protein ModC (369 aa).

An ABC transporter domain is found at 7–243 (PGQAGIHARF…LDLPMAMTDD (237 aa)). 41–48 (GQSGSGKT) provides a ligand contact to ATP. The 66-residue stretch at 304-369 (EGSILNVLAV…AQIKAVSLLA (66 aa)) folds into the Mop domain.

This sequence belongs to the ABC transporter superfamily. Molybdate importer (TC 3.A.1.8) family. The complex is composed of two ATP-binding proteins (ModC), two transmembrane proteins (ModB) and a solute-binding protein (ModA).

It is found in the cell inner membrane. It carries out the reaction molybdate(out) + ATP + H2O = molybdate(in) + ADP + phosphate + H(+). In terms of biological role, part of the ABC transporter complex ModABC involved in molybdenum import. Responsible for energy coupling to the transport system. The protein is Molybdenum import ATP-binding protein ModC of Bordetella bronchiseptica (strain ATCC BAA-588 / NCTC 13252 / RB50) (Alcaligenes bronchisepticus).